The following is a 458-amino-acid chain: Transcription factor ORF10 (458 aa).

The segment at residues 38–65 (CESCRLKKLRCSGHKSGCDRCRSQAMKC) is a DNA-binding region (zn(2)-C6 fungal-type). Residues 69 to 109 (IGAPSNSSRPKSRSHFQPNFSNMSGTAGTSKAPSPLGNDGV) form a disordered region. Over residues 71-100 (APSNSSRPKSRSHFQPNFSNMSGTAGTSKA) the composition is skewed to polar residues.

The protein resides in the nucleus. In terms of biological role, transcription factor that specifically regulates the expression of the gene cluster that mediates the biosynthesis of PR-toxin, a bicyclic sesquiterpene belonging to the eremophilane class and acting as a mycotoxin. The chain is Transcription factor ORF10 from Penicillium roqueforti (strain FM164).